The primary structure comprises 492 residues: Serine carboxypeptidase-like 31 (492 aa).

An N-terminal signal peptide occupies residues 1–30 (MDNYQTKNISNLLTSLCFTTLLILAPVVIC). Disulfide bonds link C105–C376, C270–C283, and C307–C344. Residue N156 is glycosylated (N-linked (GlcNAc...) asparagine). S198 is an active-site residue. N221 and N271 each carry an N-linked (GlcNAc...) asparagine glycan. N-linked (GlcNAc...) asparagine glycosylation is found at N372 and N383. Active-site residues include D413 and H465.

This sequence belongs to the peptidase S10 family. As to expression, expressed in roots, senescent leaves, stems, flowers and siliques.

It is found in the secreted. In terms of biological role, probable carboxypeptidase. This is Serine carboxypeptidase-like 31 (SCPL31) from Arabidopsis thaliana (Mouse-ear cress).